Reading from the N-terminus, the 273-residue chain is Shikimate dehydrogenase (NADP(+)) (273 aa).

Shikimate-binding positions include Ser-15–Ser-17 and Thr-62. Lys-66 functions as the Proton acceptor in the catalytic mechanism. Position 78 (Glu-78) interacts with NADP(+). Shikimate contacts are provided by Asn-87 and Asp-103. Residues Gly-127–Ala-131, Asn-150–Lys-155, and Met-213 contribute to the NADP(+) site. Position 215 (Tyr-215) interacts with shikimate. Gly-237 is an NADP(+) binding site.

The protein belongs to the shikimate dehydrogenase family. Homodimer.

The catalysed reaction is shikimate + NADP(+) = 3-dehydroshikimate + NADPH + H(+). It participates in metabolic intermediate biosynthesis; chorismate biosynthesis; chorismate from D-erythrose 4-phosphate and phosphoenolpyruvate: step 4/7. Its function is as follows. Involved in the biosynthesis of the chorismate, which leads to the biosynthesis of aromatic amino acids. Catalyzes the reversible NADPH linked reduction of 3-dehydroshikimate (DHSA) to yield shikimate (SA). This Shewanella woodyi (strain ATCC 51908 / MS32) protein is Shikimate dehydrogenase (NADP(+)).